The following is a 220-amino-acid chain: Putative vesicle-associated membrane protein 726 (220 aa).

At 1 to 196 the chain is on the cytoplasmic side; the sequence is MGQQSLIYSF…LWFENMKIKL (196 aa). The 105-residue stretch at 10–114 folds into the Longin domain; sequence FVARGTVILA…SLNKEFGSKL (105 aa). One can recognise a v-SNARE coiled-coil homology domain in the interval 130 to 190; that stretch reads KLSKVKAQVT…TKMKRKLWFE (61 aa). Residues 197-217 traverse the membrane as a helical; Anchor for type IV membrane protein segment; that stretch reads IVFGIIVALILIIILSVCHGF. Over 218–220 the chain is Vesicular; that stretch reads KCT.

The protein belongs to the synaptobrevin family. As to expression, expressed in flowers, leaves, stems and roots.

The protein resides in the cell membrane. The protein localises to the early endosome membrane. In terms of biological role, involved in the targeting and/or fusion of transport vesicles to their target membrane. The chain is Putative vesicle-associated membrane protein 726 (VAMP726) from Arabidopsis thaliana (Mouse-ear cress).